The following is a 91-amino-acid chain: Putative regulatory protein Cyan7425_4125 (91 aa).

Belongs to the RemA family.

In Cyanothece sp. (strain PCC 7425 / ATCC 29141), this protein is Putative regulatory protein Cyan7425_4125.